The chain runs to 405 residues: Protein NDRG4 (405 aa).

The tract at residues alanine 352–cysteine 405 is disordered. Positions threonine 361–serine 376 are enriched in low complexity. Over residues cysteine 385 to cysteine 405 the composition is skewed to polar residues.

This sequence belongs to the NDRG family.

It localises to the cytoplasm. It is found in the cytosol. In terms of biological role, contributes to the maintenance of intracerebral BDNF levels within the normal range. May enhance growth factor-induced ERK1 and ERK2 phosphorylation. May attenuate growth factor-promoted ELK1 phosphorylation in a microtubule-dependent manner. The chain is Protein NDRG4 from Xenopus tropicalis (Western clawed frog).